A 71-amino-acid polypeptide reads, in one-letter code: uncharacterized protein (71 aa).

Positions 1–26 (MIKFSVILGMIRCSLTHITTKNTVNA) are cleaved as a signal peptide.

This is an uncharacterized protein from Bacillus subtilis (strain 168).